A 395-amino-acid polypeptide reads, in one-letter code: Elongation factor Tu (395 aa).

One can recognise a tr-type G domain in the interval 10 to 204 (KPHVNVGTIG…AVDEYIPEPV (195 aa)). Residues 19–26 (GHVDHGKT) form a G1 region. A GTP-binding site is contributed by 19–26 (GHVDHGKT). Residue Thr-26 participates in Mg(2+) binding. Residues 60–64 (GITIA) form a G2 region. The G3 stretch occupies residues 81-84 (DCPG). GTP is bound by residues 81–85 (DCPGH) and 136–139 (NKVD). The segment at 136–139 (NKVD) is G4. The interval 174 to 176 (SAL) is G5.

Belongs to the TRAFAC class translation factor GTPase superfamily. Classic translation factor GTPase family. EF-Tu/EF-1A subfamily. As to quaternary structure, monomer.

It is found in the cytoplasm. It catalyses the reaction GTP + H2O = GDP + phosphate + H(+). Functionally, GTP hydrolase that promotes the GTP-dependent binding of aminoacyl-tRNA to the A-site of ribosomes during protein biosynthesis. This Exiguobacterium sp. (strain ATCC BAA-1283 / AT1b) protein is Elongation factor Tu.